A 606-amino-acid polypeptide reads, in one-letter code: MIGSKTKRKAREESGASSKPGTNSPANAKGKAKNQTTKAVKAEPKEEWGNQAEARDEAVARTQPAISTEPKTVTWKVKKKKDKTNARVMAQAKTELPAGPALVPHTKSDALPTSVVITVTKSEVKIDTGIEASLKGAAKATDKRSIKQKPEIKKEVCVKSRAGDKAKEVCVKSSAGDKAKEVCVKSRAGDKAKEVCVKSRAGDKASIVINTTDEDEDYVCSWFWTGEEPSVGSWFWPKEENPLQVYQPPPKVEEEPEPPDTFDYALKKKAAAWLRGRFIVLVPIEEPQPSLPPDGNWTLVATLIETPLGIRPLTKIPPYGGPYFQTLADLKNQIREKEKYGPNPNTCRCKSRTFSLEPVDFDKLVALLKLTRDPFIHEIATMIMGISPAYPFTQDIVHDVGITVMIENFVNNPNAKKYPRTLNINANPDAPEEVKETEAHVNKVCRDILCCPLNCSVQVEELKLLVSLSVKFDYHHVVIYYVRYFISLLNKGSVKIKFQILRVLLCLSKNQANTRELISAEVMSSLVALFHKNESKANILHIIEIFENINFQFKKRAKLFTKEMFTKSELISIFREAKEFDQKLQDLTDHSDPDVRDKVIRLILKL.

Residues 1–85 (MIGSKTKRKA…KVKKKKDKTN (85 aa)) are disordered. Residues 15-26 (GASSKPGTNSPA) are compositionally biased toward polar residues. Basic and acidic residues predominate over residues 40–59 (VKAEPKEEWGNQAEARDEAV). ARM repeat units lie at residues 349–388 (CKSRTFSLEPVDFDKLVALLKLTRDPFIHEIATMIMGISP), 470–509 (VKFDYHHVVIYYVRYFISLLNKGSVKIKFQILRVLLCLSK), 511–551 (QANT…NINF), and 568–606 (SELISIFREAKEFDQKLQDLTDHSDPDVRDKVIRLILKL).

It belongs to the eutherian X-chromosome-specific Armcx family. In terms of tissue distribution, highly expressed in the developing neural tissues, neural crest derivatives and hind limbs.

The polypeptide is Armadillo repeat-containing X-linked protein 5 (Armcx5) (Mus musculus (Mouse)).